A 499-amino-acid polypeptide reads, in one-letter code: 3-octaprenyl-4-hydroxybenzoate carboxy-lyase (499 aa).

Residue asparagine 173 participates in Mn(2+) binding. Prenylated FMN is bound by residues 176–178 (IYR), 190–192 (RWL), and 195–196 (RG). Glutamate 239 lines the Mn(2+) pocket. The active-site Proton donor is the aspartate 288.

Belongs to the UbiD family. In terms of assembly, homohexamer. It depends on prenylated FMN as a cofactor. Mn(2+) is required as a cofactor.

It localises to the cell membrane. The catalysed reaction is a 4-hydroxy-3-(all-trans-polyprenyl)benzoate + H(+) = a 2-(all-trans-polyprenyl)phenol + CO2. It functions in the pathway cofactor biosynthesis; ubiquinone biosynthesis. Catalyzes the decarboxylation of 3-octaprenyl-4-hydroxy benzoate to 2-octaprenylphenol, an intermediate step in ubiquinone biosynthesis. The sequence is that of 3-octaprenyl-4-hydroxybenzoate carboxy-lyase from Blochmanniella floridana.